Consider the following 438-residue polypeptide: Na(+)/H(+) antiporter NhaA (438 aa).

11 consecutive transmembrane segments (helical) span residues 23 to 43 (FGGIFLFLNAVLAMVVANSFL), 62 to 82 (FFIGFSLHNWIDDVLMALFFL), 104 to 124 (SFPVIAALGGMIAPGLIYFFL), 133 to 153 (GFGIPMATDIAFALGVIMLLG), 162 to 182 (VFLITLAVADDLGAIIVIALF), 185 to 205 (TNLKFAWLLGALGVVLLLALL), 221 to 241 (VLLWFCVHQSGIHATIAAVVL), 302 to 322 (FLAPISGYFIMPLFAFANAGV), 337 to 357 (FGVILGLCLGKPLGIFLITFI), 372 to 392 (WWHILGAGLLAGIGFTMSMFI), and 410 to 430 (IAILLGSLISGIIGALYLFAL).

The protein belongs to the NhaA Na(+)/H(+) (TC 2.A.33) antiporter family.

It is found in the cell inner membrane. The catalysed reaction is Na(+)(in) + 2 H(+)(out) = Na(+)(out) + 2 H(+)(in). Its function is as follows. Na(+)/H(+) antiporter that extrudes sodium in exchange for external protons. This is Na(+)/H(+) antiporter NhaA from Helicobacter pylori (strain P12).